The primary structure comprises 2193 residues: MQSGGSGGGPARNPAMGPAGRTASTSSAASPSSSSSSVQQQQQQQQQQQQQQQLASRQQQQQHRNSDTNENMFAYQPGGVQGMMGGGNFASSPGSMQMPQQSRNFFESPQQQQQQQQQGSSTQEGQQNFNPMQQAYIQFAMQAQHQKAQQQARMGMVGSSSVGKDQDARMGMLNMQDLNPSSQPQASSSKPSGDQFARGERQTESSSQQRNETKSHPQQQVGTGQLMPGNMIRPMQAPQAQQLVNNMGNNQLAFAQQWQAMQAWARERNIDLSHPANASQMAHILQARMAAQQKAGEGNVASQSPSIPISSQPASSSVVPGENSPHANSASDISGQSGSAKARHALSTGSFASTSSPRMVNPAMNPFSGQGRENPMYPRHLVQPTNGMPSGNPLQTSANETPVLDQNASTKKSLGPAEHLQMQQPRQLNTPTPNLVAPSDTGPLSNSSLQSGQGTQQAQQRSGFTKQQLHVLKAQILAFRRLKKGEGSLPPELLQAISPPPLELQTQRQISPAIGKVQDRSSDKTGEDQARSLECGKESQAAASSNGPIFSKEEDNVGDTEVALTTGHSQLFQNLGKEATSTDVATKEEQQTDVFPVKSDQGADSSTQKNPRSDSTADKGKAVASDGSQSKVPPQANSPQPPKDTASARKYYGPLFDFPFFTRKLDSYGSATANANNNLTLAYDIKDLICEEGAEFLSKKRTDSLKKINGLLAKNLERKRIRPDLVLRLQIEEKKLRLSDLQSRVREEVDRQQQEIMSMPDRPYRKFVRLCERQRLEMNRQVLANQKAVREKQLKTIFQWRKKLLEAHWAIRDARTARNRGVAKYHEKMLREFSKRKDDGRNKRMEALKNNDVERYREMLLEQQTNMPGDAAERYAVLSSFLTQTEDYLHKLGGKITATKNQQEVEEAANAAAVAARLQGLSEEEVRAAATCAREEVVIRNRFTEMNAPKENSSVNKYYTLAHAVNEVVVRQPSMLQAGTLRDYQLVGLQWMLSLYNNKLNGILADEMGLGKTVQVMALIAYLMEFKGNYGPHLIIVPNAVLVNWKSELHTWLPSVSCIYYVGTKDQRSKLFSQEVCAMKFNVLVTTYEFIMYDRSKLSKVDWKYIIIDEAQRMKDRESVLARDLDRYRCQRRLLLTGTPLQNDLKELWSLLNLLLPDVFDNRKAFHDWFAQPFQKEGPAHNIEDDWLETEKKVIVIHRLHQILEPFMLRRRVEDVEGSLPAKVSVVLRCRMSAIQSAVYDWIKATGTLRVDPDDEKLRAQKNPIYQAKIYRTLNNRCMELRKACNHPLLNYPYFNDFSKDFLVRSCGKLWILDRILIKLQRTGHRVLLFSTMTKLLDILEEYLQWRRLVYRRIDGTTSLEDRESAIVDFNDPDTDCFIFLLSIRAAGRGLNLQTADTVVIYDPDPNPKNEEQAVARAHRIGQTREVKVIYMEAVVEKLSSHQKEDELRSGGSVDLEDDMAGKDRYIGSIEGLIRNNIQQYKIDMADEVINAGRFDQRTTHEERRMTLETLLHDEERYQETVHDVPSLHEVNRMIARSEEEVELFDQMDEEFDWTEEMTNHEQVPKWLRASTREVNATVADLSKKPSKNMLSSSNLIVQPGGPGGERKRGRPKSKKINYKEIEDDIAGYSEESSEERNIDSGNEEEGDIRQFDDDELTGALGDHQTNKGEFDGENPVCGYDYPPGSGSYKKNPPRDDAGSSGSSPESHRSKEMASPVSSQKFGSLSALDTRPGSVSKRLLDDLEEGEIAASGDSHIDLQRSGSWAHDRDEGDEEQVLQPTIKRKRSIRLRPRQTAERVDGSEMPAAQPLQVDRSYRSKLRTVVDSHSSRQDQSDSSSRLRSVPAKKVASTSKLHVSSPKSGRLNATQLTVEDNAEASRETWDGTSPISSSNAGARMSHIIQKRCKIVISKLQRRIDKEGQQIVPMLTNLWKRIQNGYAAGGVNNLLELREIDHRVERLEYAGVMELASDVQLMLRGAMQFYGFSHEVRSEAKKVHNLFFDLLKMSFPDTDFREARNALSFSGSAPTLVSTPTPRGAGISQGKRQKLVNEPETEPSSPQRSQQRENSRIRVQIPQKETKLGGTTSHTDESPILAHPGELVICKKKRKDREKSGPKTRTGGSSSPVSPPPAMIGRGLRSPVSGGVPRETRLAQQQRWPNQPTHPNNSGAAGDSVGWANPVKRLRTDSGKRRPSHL.

An N-acetylmethionine modification is found at Met1. Gly residues predominate over residues 1-10 (MQSGGSGGGP). 5 disordered regions span residues 1–126 (MQSG…QEGQ), 175–231 (MQDL…PGNM), 293–466 (QKAG…GFTK), 511–558 (SPAI…DNVG), and 580–649 (TSTD…ASAR). Residues 23-62 (ASTSSAASPSSSSSSVQQQQQQQQQQQQQQQLASRQQQQQ) are compositionally biased toward low complexity. Residues 38–58 (VQQQQQQQQQQQQQQQLASRQ) adopt a coiled-coil conformation. Positions 79–88 (GVQGMMGGGN) are enriched in gly residues. Low complexity-rich tracts occupy residues 91 to 102 (SSPGSMQMPQQS), 110 to 126 (QQQQQQQQQGSSTQEGQ), and 180 to 192 (PSSQPQASSSKPS). Polar residues predominate over residues 204–223 (ESSSQQRNETKSHPQQQVGT). Low complexity predominate over residues 301 to 320 (ASQSPSIPISSQPASSSVVP). Polar residues-rich tracts occupy residues 325–339 (PHANSASDISGQSGS), 347–358 (STGSFASTSSPR), 383–412 (QPTNGMPSGNPLQTSANETPVLDQNASTKK), and 421–433 (QMQQPRQLNTPTP). Low complexity predominate over residues 445 to 463 (SNSSLQSGQGTQQAQQRSG). Residues 463–499 (GFTKQQLHVLKAQILAFRRLKKGEGSLPPELLQAISP) form the QLQ domain. Basic and acidic residues-rich tracts occupy residues 517–537 (VQDRSSDKTGEDQARSLECGK) and 611–621 (PRSDSTADKGK). Residues 626–638 (DGSQSKVPPQANS) are compositionally biased toward polar residues. Residues 705–712 (LKKINGLL) carry the Nuclear localization signal 1 motif. Residues 726 to 795 (VLRLQIEEKK…QKAVREKQLK (70 aa)) adopt a coiled-coil conformation. Positions 993–1158 (LSLYNNKLNG…WSLLNLLLPD (166 aa)) constitute a Helicase ATP-binding domain. An ATP-binding site is contributed by 1006 to 1013 (DEMGLGKT). The stretch at 1109–1129 (DEAQRMKDRESVLARDLDRYR) forms a coiled coil. The Helicase C-terminal domain maps to 1312–1489 (ILDRILIKLQ…QYKIDMADEV (178 aa)). 2 disordered regions span residues 1583–1775 (SKKP…DEEQ) and 1789–1894 (LRPR…NAGA). Over residues 1608–1617 (KRGRPKSKKI) the composition is skewed to basic residues. Positions 1618–1638 (NYKEIEDDIAGYSEESSEERN) form a coiled coil. Ser1641 is modified (phosphoserine). The segment covering 1642-1657 (GNEEEGDIRQFDDDEL) has biased composition (acidic residues). A compositionally biased stretch (basic and acidic residues) spans 1821–1832 (TVVDSHSSRQDQ). Over residues 1833–1842 (SDSSSRLRSV) the composition is skewed to low complexity. Composition is skewed to polar residues over residues 1848–1870 (ASTSKLHVSSPKSGRLNATQLTV) and 1882–1892 (DGTSPISSSNA). The region spanning 1895-2005 (RMSHIIQKRC…NLFFDLLKMS (111 aa)) is the Bromo domain. The short motif at 1901-1908 (QKRCKIVI) is the Nuclear localization signal 2 element. The span at 2022–2032 (GSAPTLVSTPT) shows a compositional bias: polar residues. Positions 2022 to 2193 (GSAPTLVSTP…DSGKRRPSHL (172 aa)) are disordered. Ser2137 is subject to Phosphoserine. Residues 2149–2166 (LAQQQRWPNQPTHPNNSG) are compositionally biased toward polar residues.

The protein belongs to the SNF2/RAD54 helicase family. As to quaternary structure, interacts with SWI3B, SWI3C, H3 and H4, but not with SWI3A, SWI3D or BSH. Interacts with LFY. Interacts with REF6. Binds to FGT1. As to expression, highly expressed in inflorescences and leaves. Low expression in siliques, roots and seedlings. Detected in shoot apical meristem, root meristem, vascular tissue of developing leaves, petals, stamens filaments, anthers and carpels.

Its subcellular location is the nucleus. It catalyses the reaction ATP + H2O = ADP + phosphate + H(+). ATPase subunit of a multiprotein complex equivalent of the SWI/SNF complex that acts by remodeling the chromatin by catalyzing an ATP-dependent alteration in the structure of nucleosomal DNA. Represses embryonic genes in leaves and controls shoot development and flowering. Activates flower homeotic genes. The association of BRM with its target genes requires REF6. Necessary to acquire heat stress (HS) memory, by globally binding to HS memory genes. The chain is ATP-dependent helicase BRM from Arabidopsis thaliana (Mouse-ear cress).